Here is a 538-residue protein sequence, read N- to C-terminus: Succinyl-CoA:acetate CoA-transferase (538 aa).

305–309 lines the CoA pocket; that stretch reads GVGSV. E330 acts as the 5-glutamyl coenzyme A thioester intermediate in catalysis. CoA contacts are provided by N420 and G424.

This sequence belongs to the acetyl-CoA hydrolase/transferase family.

It carries out the reaction succinyl-CoA + acetate = succinate + acetyl-CoA. Forms succinyl-CoA from succinate and acetyl-CoA. In Clostridium kluyveri (strain ATCC 8527 / DSM 555 / NBRC 12016 / NCIMB 10680 / K1), this protein is Succinyl-CoA:acetate CoA-transferase.